A 1049-amino-acid polypeptide reads, in one-letter code: Protein phosphatase 1 regulatory subunit 12A (1049 aa).

ANK repeat units follow at residues 39–68 (DDGA…DINY), 72–101 (DGLT…CINQ), 105–134 (EGWI…SVGV), 138–164 (EGET…RQGV), 198–227 (SGGT…DVNI), and 231–260 (DGWT…DMDV). Positions 302–947 (LIETTTTGDN…RPYSRFEKDD (646 aa)) are disordered. Polar residues predominate over residues 303 to 315 (IETTTTGDNNQSV). The segment covering 319 to 341 (KSKETLLLEPEKTAPRIETLEPE) has biased composition (basic and acidic residues). Residues 359–371 (SEEEEEEDSESEN) show a composition bias toward acidic residues. Over residues 378 to 421 (SSVPSSVSNSTPTTAPSSITVTSPTTPSNQVTTPTSPTKKVSTP) the composition is skewed to low complexity. Residues 426-436 (SPKEEDRKDES) are compositionally biased toward basic and acidic residues. Over residues 473-484 (RSASSPRLSSSL) the composition is skewed to low complexity. Positions 485–497 (DNKDKEKEKEKTR) are enriched in basic and acidic residues. Positions 545–564 (SDGTASTNRTSSYQRSTSHT) are enriched in polar residues. Over residues 571–592 (SSSRDLPAKSSSASSLEPNNSK) the composition is skewed to low complexity. Over residues 593 to 607 (AWQPSSYYQSYSIHR) the composition is skewed to polar residues. Residues 620–639 (SSTSSSTTTTTTTSSVTSPT) show a composition bias toward low complexity. The segment covering 649–664 (WAEESAEKEKEKEKES) has biased composition (basic and acidic residues). Positions 665-686 (ATVIPTINTAGTTTTTSTTGTV) are enriched in low complexity. The segment covering 702–711 (VRDEESESQR) has biased composition (basic and acidic residues). A compositionally biased stretch (basic residues) spans 712-722 (KARSRQARQSR). Basic and acidic residues predominate over residues 747–789 (RPREDEKEEKEKQDKEKQEEKKETETKEDDYRSRYRSFEEKYR). Residues 790–819 (TSLASSTTASSTIPSSSSSSSSSLYSTSSL) show a composition bias toward low complexity. Polar residues predominate over residues 820-829 (NRPNSLTGLT). Over residues 835-863 (STRDTDRESDRKEKDEDRDGDDKSQPRSI) the composition is skewed to basic and acidic residues. Basic residues predominate over residues 864 to 875 (RDRRRPREKRRS). Composition is skewed to basic and acidic residues over residues 890–906 (PDHP…EPQS) and 934–947 (GESR…EKDD).

In terms of assembly, PP1 comprises a catalytic subunit, and one or several targeting or regulatory subunits. Ppp1r12a mediates binding to myosin.

Its subcellular location is the cytoplasm. Its function is as follows. Regulates myosin phosphatase activity. In Danio rerio (Zebrafish), this protein is Protein phosphatase 1 regulatory subunit 12A (ppp1r12a).